The sequence spans 99 residues: Endothelin receptor type B (99 aa).

Over 1 to 8 (PFGAEMCK) the chain is Extracellular. The cysteines at positions 7 and 88 are disulfide-linked. A helical transmembrane segment spans residues 9-30 (LVPFIQKASVGITVLSLCALSI). Residues 31 to 51 (DRYRAVASWSRIKGIGIPKWT) are Cytoplasmic-facing. A helical membrane pass occupies residues 52–76 (AVEIVLIWVVSVVLAVPEAIGFDMI). Over 77–99 (TMDYKGSYLRICLLHPVQKTAFM) the chain is Extracellular.

Belongs to the G-protein coupled receptor 1 family. Endothelin receptor subfamily. EDNRB sub-subfamily.

Its subcellular location is the cell membrane. In terms of biological role, non-specific receptor for endothelin 1, 2, and 3. Mediates its action by association with G proteins that activate a phosphatidylinositol-calcium second messenger system. This chain is Endothelin receptor type B (EDNRB), found in Macaca fascicularis (Crab-eating macaque).